The chain runs to 308 residues: Probable manganese-dependent inorganic pyrophosphatase (308 aa).

The Mn(2+) site is built by histidine 9, aspartate 13, aspartate 15, aspartate 75, histidine 97, and aspartate 149.

Belongs to the PPase class C family. Requires Mn(2+) as cofactor.

Its subcellular location is the cytoplasm. The catalysed reaction is diphosphate + H2O = 2 phosphate + H(+). This Listeria monocytogenes serotype 4a (strain HCC23) protein is Probable manganese-dependent inorganic pyrophosphatase.